Here is a 430-residue protein sequence, read N- to C-terminus: Microtubule-associated protein tau (430 aa).

Basic and acidic residues predominate over residues 1–16; it reads MAEPRQEFDTAEDHAE. The segment at 1-245 is disordered; that stretch reads MAEPRQEFDT…PVPMPDLKNV (245 aa). Ala2 bears the N-acetylalanine mark. Tyr18 is modified (phosphotyrosine). Lys31 participates in a covalent cross-link: Glycyl lysine isopeptide (Lys-Gly) (interchain with G-Cter in ubiquitin). Ser33 and Ser48 each carry phosphoserine. Positions 48–58 are enriched in polar residues; sequence SETSDAKSTPT. Phosphothreonine is present on residues Thr56, Thr58, and Thr98. The span at 117-133 shows a compositional bias: basic and acidic residues; sequence KGKEGTGSEDRKAKGAD. At Thr142 the chain carries Phosphothreonine. Position 144 is an omega-N-methylarginine (Arg144). At Lys152 the chain carries N6,N6-dimethyllysine; alternate. At Lys152 the chain carries N6-acetyllysine; alternate. 4 positions are modified to phosphothreonine: Thr158, Thr164, Thr165, and Thr170. The segment covering 161-203 has biased composition (low complexity); that stretch reads PAKTTPSPKTPPGTGEPAKSGDRSGYSSPGSPGTPGSRSRTPS. 2 positions are modified to phosphoserine: Ser180 and Ser184. Phosphotyrosine is present on Tyr186. Residues Ser187, Ser188, and Ser191 each carry the phosphoserine modification. Phosphothreonine is present on residues Thr194 and Thr201. At Ser203 the chain carries Phosphoserine. Residue Thr206 is modified to Phosphothreonine. Position 214 is an N6-acetyllysine (Lys214). The residue at position 220 (Thr220) is a Phosphothreonine. 2 positions are modified to phosphoserine: Ser224 and Ser226. Tau/MAP repeat units lie at residues 233–263, 264–294, 295–325, and 326–357; these read QTAPVPMPDLKNVRSKIGSTENLKHQPGGGK, VQIINKKLDLSNVQSKCGSKDNIKHVPGGGS, VQIVYKPVDLSKVTSKCGSLGNIHHKPGGGQ, and VEVKSEKLDFKDRVQSKIGSLDNITHVPGGGN. Lys243 participates in a covalent cross-link: Glycyl lysine isopeptide (Lys-Gly) (interchain with G-Cter in ubiquitin). At Lys248 the chain carries N6-acetyllysine; alternate. Lys248 is modified (N6-methyllysine; alternate). A Glycyl lysine isopeptide (Lys-Gly) (interchain with G-Cter in ubiquitin); alternate cross-link involves residue Lys248. Position 251 is a phosphoserine (Ser251). Lys256 participates in a covalent cross-link: Glycyl lysine isopeptide (Lys-Gly) (interchain with G-Cter in ubiquitin). Lys270 bears the N6-acetyllysine; alternate mark. A Glycyl lysine isopeptide (Lys-Gly) (interchain with G-Cter in ubiquitin); alternate cross-link involves residue Lys270. 2 positions are modified to phosphoserine: Ser274 and Ser278. The residue at position 279 (Lys279) is an N6-acetyllysine. Cysteines 280 and 311 form a disulfide. Position 282 is a phosphoserine (Ser282). Lys287 carries the N6-acetyllysine; alternate modification. Lys287 is covalently cross-linked (Glycyl lysine isopeptide (Lys-Gly) (interchain with G-Cter in ubiquitin); alternate). Ser294 is modified (phosphoserine). Lys300 is subject to N6,N6-dimethyllysine; alternate. An N6-acetyllysine; alternate mark is found at Lys300, Lys306, and Lys310. Glycyl lysine isopeptide (Lys-Gly) (interchain with G-Cter in ubiquitin); alternate cross-links involve residues Lys300, Lys306, and Lys310. Residue Ser313 is modified to Phosphoserine. An N6-acetyllysine; alternate mark is found at Lys320, Lys332, and Lys336. Glycyl lysine isopeptide (Lys-Gly) (interchain with G-Cter in ubiquitin); alternate cross-links involve residues Lys320, Lys332, and Lys336. Arg338 is subject to Omega-N-methylarginine. Residue Ser341 is modified to Phosphoserine. Residue Lys342 forms a Glycyl lysine isopeptide (Lys-Gly) (interchain with G-Cter in ubiquitin) linkage. The residue at position 345 (Ser345) is a Phosphoserine. At Lys358 the chain carries N6-acetyllysine; alternate. Lys358 is covalently cross-linked (Glycyl lysine isopeptide (Lys-Gly) (interchain with G-Cter in ubiquitin); alternate). A Glycyl lysine isopeptide (Lys-Gly) (interchain with G-Cter in ubiquitin) cross-link involves residue Lys364. Lys374 bears the N6-acetyllysine; alternate mark. A Glycyl lysine isopeptide (Lys-Gly) (interchain with G-Cter in ubiquitin); alternate cross-link involves residue Lys374. Position 383 is a phosphotyrosine (Tyr383). Phosphoserine is present on residues Ser385 and Ser389. A disordered region spans residues 387–406; that stretch reads VVSGDTSPRHLSNVSSTGSI. The segment covering 390–406 has biased composition (polar residues); the sequence is GDTSPRHLSNVSSTGSI. A Phosphothreonine modification is found at Thr392. 4 positions are modified to phosphoserine: Ser393, Ser398, Ser405, and Ser411. Thr416 bears the Phosphothreonine mark.

Interacts with MARK1, MARK2, MARK3 and MARK4. Interacts with SQSTM1 when polyubiquitinated. Interacts with PSMC2 through SQSTM1. Interacts with FKBP4. Binds to CSNK1D. Interacts with SGK1. Interacts with PIN1. Interacts with LRRK2. Interacts with LRP1, leading to endocytosis; this interaction is reduced in the presence of LRPAP1/RAP. Post-translationally, polyubiquitinated. Requires functional TRAF6 and may provoke SQSTM1-dependent degradation by the proteasome. Phosphorylation at various serine and threonine residues in S-P or T-P motifs by proline-directed protein kinases (PDPK1, CDK1, CDK5, GSK3, MAPK) (a few sites per protein in interphase, more in mitosis), and at serine residues in K-X-G-S motifs by MAP/microtubule affinity-regulating kinase (MARK1, MARK2, MARK3 or MARK4), causing detachment from microtubules, and their disassembly. Phosphorylation at Ser-345 by BRSK1 and BRSK2 in neurons affects ability to bind microtubules and plays a role in neuron polarization. Phosphorylated by PHK. Dephosphorylation at several serine and threonine residues by the serine/threonine phosphatase PPP5C. In terms of processing, hyperphosphorylated (in particular at Thr-170, Ser-191, Thr-194, Ser-251, and Ser-345) during hibernation. Phosphorylation is fully reversible after arousal. Highly phosphorylated tau contains a number of paired helical filaments (PHFs)-like epitopes. PHF-like phosphorylation is not associated with fibril formation. Distribution of PHF-like tau is more intense in the entorhinal cortex, hippocampus and isocortical areas. PHF-like phosphorylation-dephosphorylation during hibernation cycle is synchronized with regression-re-establishment of afferentation. It may reflect a protective mechanism in an unfavorable environment.

It is found in the cytoplasm. Its subcellular location is the cytosol. The protein resides in the cell membrane. It localises to the cytoskeleton. The protein localises to the cell projection. It is found in the axon. Its subcellular location is the dendrite. In terms of biological role, promotes microtubule assembly and stability, and might be involved in the establishment and maintenance of neuronal polarity. The C-terminus binds axonal microtubules while the N-terminus binds neural plasma membrane components, suggesting that tau functions as a linker protein between both. Axonal polarity is predetermined by tau localization (in the neuronal cell) in the domain of the cell body defined by the centrosome. The short isoforms allow plasticity of the cytoskeleton whereas the longer isoforms may preferentially play a role in its stabilization. The chain is Microtubule-associated protein tau (MAPT) from Spermophilus citellus (European ground squirrel).